The primary structure comprises 205 residues: LexA repressor (205 aa).

A DNA-binding region (H-T-H motif) is located at residues 28–48; sequence RAEIAKRLGFKSANAAEEHLK. Catalysis depends on for autocatalytic cleavage activity residues serine 122 and lysine 159.

This sequence belongs to the peptidase S24 family. Homodimer.

It carries out the reaction Hydrolysis of Ala-|-Gly bond in repressor LexA.. Its function is as follows. Represses a number of genes involved in the response to DNA damage (SOS response), including recA and lexA. In the presence of single-stranded DNA, RecA interacts with LexA causing an autocatalytic cleavage which disrupts the DNA-binding part of LexA, leading to derepression of the SOS regulon and eventually DNA repair. The chain is LexA repressor from Shewanella woodyi (strain ATCC 51908 / MS32).